The following is a 204-amino-acid chain: MVEVLRSSTFLLLRNWEFTLAWIVFFTIPLVITPLPYVGFLAFFFILLFFNSTTQYFVKVLSKNEKSLEIKEIFKIKKPVFSFSLGESVYLFFTALLYYLFTKFYAVLFFWWWFYKPFLEKELYYARTFEDGFKALLILLLRPNWKYIKLGLRWSFIGLVLLTIAVLLVLSIAGVLLASFVVLLLSVVLAHFTAETILRIKTLA.

Helical transmembrane passes span 21–50 (AWIVFFTIPLVITPLPYVGFLAFFFILLFF), 92–114 (FFTALLYYLFTKFYAVLFFWWWF), 150–172 (LGLRWSFIGLVLLTIAVLLVLSI), and 176–198 (LLASFVVLLLSVVLAHFTAETIL).

It localises to the cell membrane. This is an uncharacterized protein from Aquifex aeolicus (strain VF5).